Consider the following 354-residue polypeptide: MKFLDQCKIYIRSGNGGGGSVSFRREKYIEYGGPDGGDGGRGGDVWIEAVEGLNTLIDYRYQQHFKAGTGVHGMGRARHGAAGEDVVLKVPVGTEVLEEDKETLIADLDHAGMRLLLAKGGNGGWGNLHFKGPVNQAPKYANPGQEGEERWIWLRLKLIADVGLVGLPNAGKSTFLAAASAAKPKIADYPFTTLTPNLGVVDLSSSERFVLADIPGLIEGASEGAGLGTRFLGHVERSATLIHLIDATQDDVAGAYETIRGELEAYGDELADKAEILALNKIDALDEETLAEKVAELEAVSGIKPRLVSGVSGQGVTELLRAAYKQVRIRRGDLEEEIDDDEDHVDETPGGWTP.

An Obg domain is found at 1-159 (MKFLDQCKIY…RWIWLRLKLI (159 aa)). An OBG-type G domain is found at 160–328 (ADVGLVGLPN…LLRAAYKQVR (169 aa)). Residues 166 to 173 (GLPNAGKS), 191 to 195 (FTTLT), 213 to 216 (DIPG), 280 to 283 (NKID), and 309 to 311 (SGV) each bind GTP. Mg(2+) contacts are provided by Ser-173 and Thr-193. Acidic residues predominate over residues 335 to 345 (EEEIDDDEDHV). The disordered stretch occupies residues 335–354 (EEEIDDDEDHVDETPGGWTP).

The protein belongs to the TRAFAC class OBG-HflX-like GTPase superfamily. OBG GTPase family. As to quaternary structure, monomer. Requires Mg(2+) as cofactor.

The protein resides in the cytoplasm. Functionally, an essential GTPase which binds GTP, GDP and possibly (p)ppGpp with moderate affinity, with high nucleotide exchange rates and a fairly low GTP hydrolysis rate. Plays a role in control of the cell cycle, stress response, ribosome biogenesis and in those bacteria that undergo differentiation, in morphogenesis control. The chain is GTPase Obg from Caulobacter vibrioides (strain ATCC 19089 / CIP 103742 / CB 15) (Caulobacter crescentus).